A 64-amino-acid polypeptide reads, in one-letter code: MKQKTHKGAAKRIKISGSGKLRREQANRRHLLEGKPSKRTRRLKGTEDVAPADVKRMKRLLGKA.

Residues M1–K14 are compositionally biased toward basic residues. The tract at residues M1–A50 is disordered. Residues L21 to P36 show a composition bias toward basic and acidic residues.

It belongs to the bacterial ribosomal protein bL35 family.

The polypeptide is Large ribosomal subunit protein bL35 (Corynebacterium jeikeium (strain K411)).